A 564-amino-acid chain; its full sequence is NAD-dependent malic enzyme (564 aa).

Catalysis depends on Tyr104, which acts as the Proton donor. Arg157 lines the NAD(+) pocket. Residue Lys175 is the Proton acceptor of the active site. The a divalent metal cation site is built by Glu246, Asp247, and Asp270. Residues Asp270 and Asn417 each contribute to the NAD(+) site.

Belongs to the malic enzymes family. In terms of assembly, homotetramer. It depends on Mg(2+) as a cofactor. Mn(2+) serves as cofactor.

It catalyses the reaction (S)-malate + NAD(+) = pyruvate + CO2 + NADH. The enzyme catalyses oxaloacetate + H(+) = pyruvate + CO2. This is NAD-dependent malic enzyme from Aeromonas salmonicida (strain A449).